Reading from the N-terminus, the 84-residue chain is Cell division topological specificity factor (84 aa).

It belongs to the MinE family.

Prevents the cell division inhibition by proteins MinC and MinD at internal division sites while permitting inhibition at polar sites. This ensures cell division at the proper site by restricting the formation of a division septum at the midpoint of the long axis of the cell. This is Cell division topological specificity factor from Burkholderia ambifaria (strain MC40-6).